A 348-amino-acid polypeptide reads, in one-letter code: D-alanine--D-alanine ligase (348 aa).

Residues 136 to 344 (KSVFKSYNLP…LEKLVANLIE (209 aa)) form the ATP-grasp domain. 171-226 (NKIISYPCFIKPANLGSSVGITKAYSKEEFIAGIEFAAKYDERIIVEKSIEGRELE) provides a ligand contact to ATP. Mg(2+)-binding residues include aspartate 297, glutamate 311, and asparagine 313.

It belongs to the D-alanine--D-alanine ligase family. Mg(2+) serves as cofactor. It depends on Mn(2+) as a cofactor.

The protein resides in the cytoplasm. The catalysed reaction is 2 D-alanine + ATP = D-alanyl-D-alanine + ADP + phosphate + H(+). The protein operates within cell wall biogenesis; peptidoglycan biosynthesis. In terms of biological role, cell wall formation. This is D-alanine--D-alanine ligase from Prochlorococcus marinus (strain NATL2A).